A 169-amino-acid chain; its full sequence is Cell division inhibitor SulA (169 aa).

The segment at 106–112 (ALRTGNY) is ftsZ binding. Residues 162–169 (KIHSNLYH) are lon protease binding.

This sequence belongs to the SulA family. In terms of assembly, interacts with FtsZ. Post-translationally, is rapidly cleaved and degraded by the Lon protease once DNA damage is repaired.

Component of the SOS system and an inhibitor of cell division. Accumulation of SulA causes rapid cessation of cell division and the appearance of long, non-septate filaments. In the presence of GTP, binds a polymerization-competent form of FtsZ in a 1:1 ratio, thus inhibiting FtsZ polymerization and therefore preventing it from participating in the assembly of the Z ring. This mechanism prevents the premature segregation of damaged DNA to daughter cells during cell division. The polypeptide is Cell division inhibitor SulA (Escherichia coli O45:K1 (strain S88 / ExPEC)).